A 3418-amino-acid chain; its full sequence is Breast cancer type 2 susceptibility protein (3418 aa).

Positions 1–40 (MPIGSKERPTFFEIFKTRCNKADLGPISLNWFEELSSEAP) are interaction with PALB2. The tract at residues 37–68 (SEAPPYNSEPAEESEHKNNNYEPNLFKTPQRK) is disordered. Ser-70 carries the post-translational modification Phosphoserine. The segment at 358 to 381 (VEPNDTDPLDSNVANQKPFESGSD) is disordered. Residues Ser-445, Ser-492, and Ser-755 each carry the phosphoserine modification. The tract at residues 639–1000 (LHSSVKRSCS…NKWAGLLGPI (362 aa)) is interaction with NPM1. 6 BRCA2 repeats span residues 1002–1036 (NHSFGGSFRTASNKEIKLSEHNIKKSKMFFKDIEE), 1212–1246 (NEVGFRGFYSAHGTKLNVSTEALQKAVKLFSDIEN), 1421–1455 (FETSDTFFQTASGKNISVAKESFNKIVNFFDQKPE), 1517–1551 (KEPTLLGFHTASGKKVKIAKESLDKVKNLFDEKEQ), 1664–1698 (IENSALAFYTSCSRKTSVSQTSLLEAKKWLREGIF), and 1837–1871 (FEVGPPAFRIASGKIVCVSHETIKKVKDIFTDSFS). An interaction with RAD51 region spans residues 1003 to 2082 (HSFGGSFRTA…LHKVKGVLEE (1080 aa)). Residues 1338-1781 (GSDSSKNDTV…IEPVLKNVED (444 aa)) are interaction with POLH. The tract at residues 1410 to 1595 (TATKTEQNIK…TAAPKCKEMQ (186 aa)) is required for stimulation of POLH DNA polymerization activity. Phosphoserine is present on Ser-1970. The BRCA2 7 repeat unit spans residues 1971-2005 (SANTCGIFSTASGKSVQVSDASLQNARQVFSEIED). The residue at position 2035 (Thr-2035) is a Phosphothreonine. One copy of the BRCA2 8 repeat lies at 2051–2085 (NSSAFSGFSTASGKQVSILESSLHKVKGVLEEFDL). Ser-2095 carries the phosphoserine modification. Residues 2270–2337 (GKRRGEPLIL…EPITCVPFRT (68 aa)) are interaction with HSF2BP. The interaction with FANCD2 stretch occupies residues 2350-2545 (TAPGQEFLSK…SHKQLYTYGV (196 aa)). The disordered stretch occupies residues 2430 to 2450 (ENRQKQNIDGHGSDDSKNKIN). Residues 2481–2832 (ITSLQNARDI…QRAYPIQWME (352 aa)) are interaction with SEM1. A Nuclear export signal; masked by interaction with SEM1 motif is present at residues 2682 to 2698 (AAKTLVLCVSDIISLSA). Residue Ser-3291 is modified to Phosphoserine; by CDK1 and CDK2. Ser-3319 carries the phosphoserine modification. A Phosphothreonine; by CHEK1 and CHEK2 modification is found at Thr-3387. The tract at residues 3393 to 3418 (EQESSQASTEECEKNKQDTITTKKYI) is disordered.

Monomer and dimer. Interacts with RAD51; regulates RAD51 recruitment and function at sites of DNA repair. Interacts with WDR16, USP11, DMC1, ROCK2 and NPM1. Interacts with SEM1; the interaction masks a nuclear export signal in BRCA2. Interacts with both nonubiquitinated and monoubiquitinated FANCD2; this complex also includes XRCC3 and phosphorylated FANCG. Part of a BRCA complex containing BRCA1, BRCA2 and PALB2. Component of the homologous recombination repair (HR) complex composed of ERCC5/XPG, BRCA2, PALB2, DSS1 and RAD51. Within the complex, interacts with ERCC5/XPG and PALB2. Interacts directly with PALB2 which may serve as a scaffold for a HR complex containing PALB2, BRCA2, RAD51C, RAD51 and XRCC3. Interacts with BRCA1 only in the presence of PALB2 which serves as the bridging protein. Interacts with POLH; the interaction is direct. Interacts with the TREX-2 complex subunits PCID2 and SEM1. Interacts with HSF2BP and BRME1; the interaction with HSF2BP is direct and allows the formation of a ternary complex. The complex BRME1:HSF2BP:BRCA2 interacts with SPATA22, MEIOB and RAD51. Phosphorylated by ATM upon irradiation-induced DNA damage. Phosphorylation by CHEK1 and CHEK2 regulates interaction with RAD51. Phosphorylation at Ser-3291 by CDK1 and CDK2 is low in S phase when recombination is active, but increases as cells progress towards mitosis; this phosphorylation prevents homologous recombination-dependent repair during S phase and G2 by inhibiting RAD51 binding. In terms of processing, ubiquitinated in the absence of DNA damage; this does not lead to proteasomal degradation. In contrast, ubiquitination in response to DNA damage leads to proteasomal degradation. Highest levels of expression in breast and thymus, with slightly lower levels in lung, ovary and spleen.

It is found in the nucleus. The protein resides in the cytoplasm. Its subcellular location is the cytoskeleton. The protein localises to the microtubule organizing center. It localises to the centrosome. In terms of biological role, involved in double-strand break repair and/or homologous recombination. Binds RAD51 and potentiates recombinational DNA repair by promoting assembly of RAD51 onto single-stranded DNA (ssDNA). Acts by targeting RAD51 to ssDNA over double-stranded DNA, enabling RAD51 to displace replication protein-A (RPA) from ssDNA and stabilizing RAD51-ssDNA filaments by blocking ATP hydrolysis. Part of a PALB2-scaffolded HR complex containing RAD51C and which is thought to play a role in DNA repair by HR. May participate in S phase checkpoint activation. Binds selectively to ssDNA, and to ssDNA in tailed duplexes and replication fork structures. May play a role in the extension step after strand invasion at replication-dependent DNA double-strand breaks; together with PALB2 is involved in both POLH localization at collapsed replication forks and DNA polymerization activity. In concert with NPM1, regulates centrosome duplication. Interacts with the TREX-2 complex (transcription and export complex 2) subunits PCID2 and SEM1, and is required to prevent R-loop-associated DNA damage and thus transcription-associated genomic instability. Silencing of BRCA2 promotes R-loop accumulation at actively transcribed genes in replicating and non-replicating cells, suggesting that BRCA2 mediates the control of R-loop associated genomic instability, independently of its known role in homologous recombination. This Homo sapiens (Human) protein is Breast cancer type 2 susceptibility protein.